The sequence spans 69 residues: Sec-independent protein translocase protein TatA (69 aa).

A helical membrane pass occupies residues 1 to 21; it reads MFGKLGMPELVLIFAVALVIF.

The protein belongs to the TatA/E family. Forms a complex with TatC.

The protein localises to the cell membrane. Functionally, part of the twin-arginine translocation (Tat) system that transports large folded proteins containing a characteristic twin-arginine motif in their signal peptide across membranes. TatA could form the protein-conducting channel of the Tat system. The chain is Sec-independent protein translocase protein TatA from Alkaliphilus metalliredigens (strain QYMF).